The following is a 129-amino-acid chain: Small ribosomal subunit protein uS9 (129 aa).

The protein belongs to the universal ribosomal protein uS9 family.

The sequence is that of Small ribosomal subunit protein uS9 from Chlorobium luteolum (strain DSM 273 / BCRC 81028 / 2530) (Pelodictyon luteolum).